The sequence spans 470 residues: ATP synthase subunit beta (470 aa).

An ATP-binding site is contributed by 148 to 155; the sequence is GGAGVGKT.

The protein belongs to the ATPase alpha/beta chains family. F-type ATPases have 2 components, CF(1) - the catalytic core - and CF(0) - the membrane proton channel. CF(1) has five subunits: alpha(3), beta(3), gamma(1), delta(1), epsilon(1). CF(0) has three main subunits: a(1), b(2) and c(9-12). The alpha and beta chains form an alternating ring which encloses part of the gamma chain. CF(1) is attached to CF(0) by a central stalk formed by the gamma and epsilon chains, while a peripheral stalk is formed by the delta and b chains.

It localises to the cell inner membrane. It carries out the reaction ATP + H2O + 4 H(+)(in) = ADP + phosphate + 5 H(+)(out). Its function is as follows. Produces ATP from ADP in the presence of a proton gradient across the membrane. The catalytic sites are hosted primarily by the beta subunits. In Saccharophagus degradans (strain 2-40 / ATCC 43961 / DSM 17024), this protein is ATP synthase subunit beta.